We begin with the raw amino-acid sequence, 449 residues long: Na(+)-translocating NADH-quinone reductase subunit A (449 aa).

The protein belongs to the NqrA family. As to quaternary structure, composed of six subunits; NqrA, NqrB, NqrC, NqrD, NqrE and NqrF.

The catalysed reaction is a ubiquinone + n Na(+)(in) + NADH + H(+) = a ubiquinol + n Na(+)(out) + NAD(+). In terms of biological role, NQR complex catalyzes the reduction of ubiquinone-1 to ubiquinol by two successive reactions, coupled with the transport of Na(+) ions from the cytoplasm to the periplasm. NqrA to NqrE are probably involved in the second step, the conversion of ubisemiquinone to ubiquinol. The protein is Na(+)-translocating NADH-quinone reductase subunit A of Serratia proteamaculans (strain 568).